The sequence spans 540 residues: MVRFIFITGGVVSSLGKGLTAASLAMLLQAKGFKVCLRKLDPYLNVDPGTMNPHQHGEVYVTDDGAETDLDLGHYERFTGVPACKFDNITTGAVYSKLLKEERLGNYTGLTVQVIPHVTNIIKDFILSNTKGFDFVLCEIGGTVGDIEGLPFFEAIRQIGNELKSKQCLFIHLTLLPYVKTARELKTKPTQHSVKELRTIGISPNILVCRAERKIAKSEIEKIALFCNIDPEYVIPAIDQKNIYLVPLAYHDYGLDNKVLKFFNLTIAPSKLNRWHDIIERLKESHSKVRIAIIAKYHKLKDAYKSVIEALDHAGIYHKYKVDLVWINAENVTNENISKKLLGVDGILVPGGFGERATEGKILAVNYARTNNIPFFGICLGMQLAAIEIARNLVGLKDAVTEEFKTAGTKIIERISKHDEDFNPSDITIENIKKTMRLGSYTCNLVSDSITANAYGELKISERHRHRYKFNNDFQDIFEKNGVKFSGFSEDKKIVEAIELPKLLWFVGVQFHPEFKSKPFEAHPLFIRFVEAAIKYNKNN.

The segment at 1–265 is amidoligase domain; that stretch reads MVRFIFITGG…DNKVLKFFNL (265 aa). CTP is bound at residue serine 13. Serine 13 contributes to the UTP binding site. ATP-binding positions include 14-19 and aspartate 71; that span reads SLGKGL. 2 residues coordinate Mg(2+): aspartate 71 and glutamate 139. CTP contacts are provided by residues 146 to 148, 186 to 191, and lysine 222; these read DIE and KTKPTQ. UTP-binding positions include 186-191 and lysine 222; that span reads KTKPTQ. Residues 290 to 539 form the Glutamine amidotransferase type-1 domain; it reads RIAIIAKYHK…VEAAIKYNKN (250 aa). Glycine 352 lines the L-glutamine pocket. Cysteine 379 serves as the catalytic Nucleophile; for glutamine hydrolysis. L-glutamine is bound by residues 380–383, glutamate 403, and arginine 467; that span reads LGMQ. Catalysis depends on residues histidine 512 and glutamate 514.

It belongs to the CTP synthase family. In terms of assembly, homotetramer.

The enzyme catalyses UTP + L-glutamine + ATP + H2O = CTP + L-glutamate + ADP + phosphate + 2 H(+). It carries out the reaction L-glutamine + H2O = L-glutamate + NH4(+). It catalyses the reaction UTP + NH4(+) + ATP = CTP + ADP + phosphate + 2 H(+). The protein operates within pyrimidine metabolism; CTP biosynthesis via de novo pathway; CTP from UDP: step 2/2. With respect to regulation, allosterically activated by GTP, when glutamine is the substrate; GTP has no effect on the reaction when ammonia is the substrate. The allosteric effector GTP functions by stabilizing the protein conformation that binds the tetrahedral intermediate(s) formed during glutamine hydrolysis. Inhibited by the product CTP, via allosteric rather than competitive inhibition. In terms of biological role, catalyzes the ATP-dependent amination of UTP to CTP with either L-glutamine or ammonia as the source of nitrogen. Regulates intracellular CTP levels through interactions with the four ribonucleotide triphosphates. In Rickettsia bellii (strain RML369-C), this protein is CTP synthase.